Reading from the N-terminus, the 507-residue chain is Prolyl carboxy peptidase like protein 5 (507 aa).

The signal sequence occupies residues 1–16 (MNIFISLAILIATTHC). Asn-125 carries an N-linked (GlcNAc...) asparagine glycan. The active-site Charge relay system is the Ser-172. N-linked (GlcNAc...) asparagine glycans are attached at residues Asn-332 and Asn-407. Catalysis depends on charge relay system residues Asp-439 and His-466.

The protein belongs to the peptidase S28 family.

This Caenorhabditis elegans protein is Prolyl carboxy peptidase like protein 5.